Reading from the N-terminus, the 254-residue chain is MHTSLTVKNTVIGSGRTKIAVPLVARDAADLSSVLSQIKNLPFDIVEFRADFLECAGSIGEVLRHTQAVRDALPDKPLLFTFRRHCEGGSFPCSDDYYFELLDALIESRLPDIIDIELFSGETAVRRAVANAQKNGIAALLCNHEFHRTPPQEEIVCRLKQMEDCGADICKIAVMPQSSEDVLTLLSATLEAKRLVAKPVITMSMGQTGAVSRLAGQVFGSSITFGSGTQNSAPGQIGVSALRAALDCLESGAD.

3-dehydroquinate is bound by residues 47–49 (EFR) and R83. Catalysis depends on H144, which acts as the Proton donor/acceptor. Catalysis depends on K171, which acts as the Schiff-base intermediate with substrate. Residues R213, S232, and Q236 each contribute to the 3-dehydroquinate site.

This sequence belongs to the type-I 3-dehydroquinase family. Homodimer.

The catalysed reaction is 3-dehydroquinate = 3-dehydroshikimate + H2O. It participates in metabolic intermediate biosynthesis; chorismate biosynthesis; chorismate from D-erythrose 4-phosphate and phosphoenolpyruvate: step 3/7. Involved in the third step of the chorismate pathway, which leads to the biosynthesis of aromatic amino acids. Catalyzes the cis-dehydration of 3-dehydroquinate (DHQ) and introduces the first double bond of the aromatic ring to yield 3-dehydroshikimate. The polypeptide is 3-dehydroquinate dehydratase (Neisseria gonorrhoeae (strain ATCC 700825 / FA 1090)).